The following is a 36-amino-acid chain: Photosystem I reaction center subunit VIII (36 aa).

Residues 6 to 28 (LPSIFVPLIGLFFPAIAMASLFL) traverse the membrane as a helical segment.

This sequence belongs to the PsaI family.

It is found in the plastid. The protein resides in the chloroplast thylakoid membrane. Functionally, may help in the organization of the PsaL subunit. The sequence is that of Photosystem I reaction center subunit VIII from Amborella trichopoda.